We begin with the raw amino-acid sequence, 190 residues long: Recombination protein RecR (190 aa).

The C4-type zinc-finger motif lies at 58–73; it reads CEQCGALSENELCEIC. The Toprim domain occupies 81–167; the sequence is NILCIVESPK…TFSKIAQGIP (87 aa).

The protein belongs to the RecR family.

In terms of biological role, may play a role in DNA repair. It seems to be involved in an RecBC-independent recombinational process of DNA repair. It may act with RecF and RecO. The protein is Recombination protein RecR of Campylobacter jejuni subsp. jejuni serotype O:23/36 (strain 81-176).